The following is a 224-amino-acid chain: GTP cyclohydrolase 1 (224 aa).

The tract at residues 1-20 (MKQEKTVSPTVENNRSAESR) is disordered. Zn(2+) is bound by residues cysteine 114, histidine 117, and cysteine 185.

Belongs to the GTP cyclohydrolase I family. As to quaternary structure, toroid-shaped homodecamer, composed of two pentamers of five dimers.

It catalyses the reaction GTP + H2O = 7,8-dihydroneopterin 3'-triphosphate + formate + H(+). The protein operates within cofactor biosynthesis; 7,8-dihydroneopterin triphosphate biosynthesis; 7,8-dihydroneopterin triphosphate from GTP: step 1/1. The chain is GTP cyclohydrolase 1 from Chlorobaculum tepidum (strain ATCC 49652 / DSM 12025 / NBRC 103806 / TLS) (Chlorobium tepidum).